Consider the following 604-residue polypeptide: NADP-dependent malic enzyme, mitochondrial (604 aa).

The segment at 28 to 50 is disordered; the sequence is SAPAQGCHSKSGPPRPVPLKKRG. The active-site Proton donor is Tyr-137. Position 190 (Arg-190) interacts with NADP(+). Lys-208 (proton acceptor) is an active-site residue. A divalent metal cation-binding residues include Glu-280, Asp-281, and Asp-304. Position 304 (Asp-304) interacts with NADP(+). Ser-371 is modified (phosphoserine). Asn-443 lines the NADP(+) pocket.

The protein belongs to the malic enzymes family. Mg(2+) serves as cofactor. Mn(2+) is required as a cofactor.

The protein localises to the mitochondrion matrix. It catalyses the reaction (S)-malate + NADP(+) = pyruvate + CO2 + NADPH. The enzyme catalyses oxaloacetate + H(+) = pyruvate + CO2. In Mus musculus (Mouse), this protein is NADP-dependent malic enzyme, mitochondrial (Me3).